Reading from the N-terminus, the 541-residue chain is Effector protein hopAB1 (541 aa).

3 disordered regions span residues 1 to 94, 168 to 222, and 317 to 338; these read MPGI…EAQQ, QRAL…RHPQ, and RQTT…SGRR. The segment covering 18 to 31 has biased composition (basic and acidic residues); the sequence is TDGEPVTEREHDSS. Residues 183-196 show a composition bias toward low complexity; it reads SSSGSSQRSLIGRS.

This sequence belongs to the HopAB family.

The protein localises to the secreted. In terms of biological role, effector protein that plays different roles depending on the species and plant cultivars that interact with the pathogen. Acts as a virulence determinant by enhancing the development of disease symptoms and bacterial growth. Acts as an avirulence factor by eliciting hypersensitive response (HR) and plant resistance. This chain is Effector protein hopAB1 (hopAB1), found in Pseudomonas savastanoi (Pseudomonas syringae pv. savastanoi).